A 586-amino-acid polypeptide reads, in one-letter code: Ezrin (586 aa).

In terms of domain architecture, FERM spans 2 to 296; it reads PKPINVRVTT…NHELYMRRRK (295 aa). Lys-60 carries the post-translational modification N6-acetyllysine. The short motif at 115-120 is the [IL]-x-C-x-x-[DE] motif element; that stretch reads IYCPPE. Tyr-146 bears the Phosphotyrosine; by PDGFR mark. Residues 244 to 586 are interaction with SCYL3; it reads EIRNISFNDK…KQRIDEFEAL (343 aa). A coiled-coil region spans residues 302–462; the sequence is VQQMKAQARE…QDDLVKTKEE (161 aa). The tract at residues 306-341 is disordered; it reads KAQAREEKHQKQLERQQLETEKKRRETVEREKEQMM. Positions 308-341 are enriched in basic and acidic residues; sequence QAREEKHQKQLERQQLETEKKRRETVEREKEQMM. Tyr-354 is modified (phosphotyrosine; by PDGFR). Phosphoserine is present on Ser-366. At Tyr-478 the chain carries Phosphotyrosine. Residues 485-564 form a disordered region; sequence VQESLQDEGA…NENMRQGRDK (80 aa). The segment covering 507 to 528 has biased composition (basic and acidic residues); it reads GIRDDRNEEKRITEAEKNERVQ. Over residues 530-539 the composition is skewed to polar residues; the sequence is QLLTLSSELS. At Ser-535 the chain carries Phosphoserine. Residues 540 to 564 show a composition bias toward basic and acidic residues; the sequence is QARDENKRTHNDIIHNENMRQGRDK. At Thr-567 the chain carries Phosphothreonine; by ROCK2 and PKC/PRKCI.

As to quaternary structure, monomer. Homodimer. Interacts with PALS1 and NHERF2. Found in a complex with EZR, PODXL and NHERF2. Interacts with MCC, PLEKHG6, PODXL, SCYL3/PACE1, NHERF1 and TMEM8B. Interacts (when phosphorylated) with FES/FPS. Interacts with dimeric S100P, the interaction may be activating through unmasking of F-actin binding sites. Identified in complexes that contain VIM, EZR, AHNAK, BFSP1, BFSP2, ANK2, PLEC, PRX and spectrin. Detected in a complex composed of at least EZR, AHNAK, PPL and PRX. Interacts with PDPN (via cytoplasmic domain); activates RHOA and promotes epithelial-mesenchymal transition. Interacts with SPN/CD43 cytoplasmic tail, CD44 and ICAM2. Interacts with SLC9A3; interaction targets SLC9A3 to the apical membrane. Interacts with SLC9A1; regulates interactions of SLC9A1 with cytoskeletal and promotes stress fiber formation. Interacts with CLIC5; may work together in a complex which also includes RDX and MYO6 to stabilize linkages between the plasma membrane and subjacent actin cytoskeleton at the base of stereocilia. In terms of processing, phosphorylated by tyrosine-protein kinases. Phosphorylation by ROCK2 suppresses the head-to-tail association of the N-terminal and C-terminal halves resulting in an opened conformation which is capable of actin and membrane-binding. S-nitrosylation is induced by interferon-gamma and oxidatively-modified low-densitity lipoprotein (LDL(ox)) possibly implicating the iNOS-S100A8/9 transnitrosylase complex. In terms of tissue distribution, expressed in cerebral cortex, basal ganglia, hippocampus, hypophysis, and optic nerve. Weakly expressed in brain stem and diencephalon. Stronger expression was detected in gray matter of frontal lobe compared to white matter (at protein level). Component of the microvilli of intestinal epithelial cells. Preferentially expressed in astrocytes of hippocampus, frontal cortex, thalamus, parahippocampal cortex, amygdala, insula, and corpus callosum. Not detected in neurons in most tissues studied.

It localises to the apical cell membrane. It is found in the cell projection. Its subcellular location is the microvillus membrane. The protein localises to the ruffle membrane. The protein resides in the cytoplasm. It localises to the cell cortex. It is found in the cytoskeleton. Its subcellular location is the microvillus. Its activity is regulated as follows. A head-to-tail association, of the N-terminal and C-terminal halves results in a closed conformation (inactive form) which is incapable of actin or membrane-binding. In terms of biological role, probably involved in connections of major cytoskeletal structures to the plasma membrane. In epithelial cells, required for the formation of microvilli and membrane ruffles on the apical pole. Along with PLEKHG6, required for normal macropinocytosis. This is Ezrin (EZR) from Homo sapiens (Human).